A 974-amino-acid chain; its full sequence is Probable proton ATPase 1B (974 aa).

Residues 1-23 (MSSKKYELDAAAFEDKPESHSDA) show a composition bias toward basic and acidic residues. A disordered region spans residues 1–61 (MSSKKYELDA…ATDLLPPSKG (61 aa)). Transmembrane regions (helical) follow at residues 93–112 (GLWG…EFAL), 118–137 (GAIL…YETI), 265–286 (VMLA…YLLA), and 295–321 (ALQF…TLAV). Asp351 acts as the 4-aspartylphosphate intermediate in catalysis. The next 6 membrane-spanning stretches (helical) occupy residues 631–651 (AAAD…AMLV), 662–684 (FLTY…CFSL), 698–712 (FFHL…ITLL), 738–761 (VVFV…LWIG), 813–840 (FFFY…AASF), and 869–887 (VWIY…KVLA). Positions 952-974 (REDTHVLNESTSPVNAFSPKVKK) are disordered.

This sequence belongs to the cation transport ATPase (P-type) (TC 3.A.3) family. Type IIIA subfamily.

It localises to the membrane. The enzyme catalyses ATP + H2O + H(+)(in) = ADP + phosphate + 2 H(+)(out). The chain is Probable proton ATPase 1B (H1B) from Leishmania donovani.